The sequence spans 800 residues: DNA topoisomerase 4 subunit A (800 aa).

In terms of domain architecture, Topo IIA-type catalytic spans Leu-31–Glu-495. Residue Tyr-119 is the O-(5'-phospho-DNA)-tyrosine intermediate of the active site.

This sequence belongs to the type II topoisomerase GyrA/ParC subunit family. ParC type 2 subfamily. As to quaternary structure, heterotetramer composed of ParC and ParE.

It localises to the cell membrane. It catalyses the reaction ATP-dependent breakage, passage and rejoining of double-stranded DNA.. Topoisomerase IV is essential for chromosome segregation. It relaxes supercoiled DNA. Performs the decatenation events required during the replication of a circular DNA molecule. This is DNA topoisomerase 4 subunit A from Staphylococcus aureus (strain NCTC 8325 / PS 47).